We begin with the raw amino-acid sequence, 129 residues long: Transcription antitermination protein NusB (129 aa).

The protein belongs to the NusB family.

Its function is as follows. Involved in transcription antitermination. Required for transcription of ribosomal RNA (rRNA) genes. Binds specifically to the boxA antiterminator sequence of the ribosomal RNA (rrn) operons. The sequence is that of Transcription antitermination protein NusB from Staphylococcus aureus (strain MRSA252).